Here is a 173-residue protein sequence, read N- to C-terminus: MAIILGVDPGSRITGYGVIKCVGRQQVYVGSGCIRTSSDELPLRLKQIFDGLSEIIRQYQPDEFAIERVFMAKNADSALKLGQARGAAIVAATAANLPVAEYSATQIKSAVVGTGRAQKTQVQHMIQQLLKLPSAPQADAADALGVAVCHYHTSQSLVALAGRANVRTYGRYK.

Catalysis depends on residues aspartate 8, glutamate 67, and aspartate 139. Aspartate 8, glutamate 67, and aspartate 139 together coordinate Mg(2+).

The protein belongs to the RuvC family. In terms of assembly, homodimer which binds Holliday junction (HJ) DNA. The HJ becomes 2-fold symmetrical on binding to RuvC with unstacked arms; it has a different conformation from HJ DNA in complex with RuvA. In the full resolvosome a probable DNA-RuvA(4)-RuvB(12)-RuvC(2) complex forms which resolves the HJ. Mg(2+) serves as cofactor.

Its subcellular location is the cytoplasm. It catalyses the reaction Endonucleolytic cleavage at a junction such as a reciprocal single-stranded crossover between two homologous DNA duplexes (Holliday junction).. The RuvA-RuvB-RuvC complex processes Holliday junction (HJ) DNA during genetic recombination and DNA repair. Endonuclease that resolves HJ intermediates. Cleaves cruciform DNA by making single-stranded nicks across the HJ at symmetrical positions within the homologous arms, yielding a 5'-phosphate and a 3'-hydroxyl group; requires a central core of homology in the junction. The consensus cleavage sequence is 5'-(A/T)TT(C/G)-3'. Cleavage occurs on the 3'-side of the TT dinucleotide at the point of strand exchange. HJ branch migration catalyzed by RuvA-RuvB allows RuvC to scan DNA until it finds its consensus sequence, where it cleaves and resolves the cruciform DNA. This Shewanella pealeana (strain ATCC 700345 / ANG-SQ1) protein is Crossover junction endodeoxyribonuclease RuvC.